The primary structure comprises 649 residues: 2-hydroxyacyl-CoA lyase 2 (649 aa).

A helical membrane pass occupies residues 2 to 21 (FHLIPFVVAFLLVFLTWFLI). Glu84 provides a ligand contact to thiamine diphosphate. The tract at residues 474 to 554 (DFVGSAAYIL…AIGVIGNDAC (81 aa)) is thiamine pyrophosphate binding. Mg(2+) contacts are provided by Asp525 and Asn551.

It belongs to the TPP enzyme family. Mg(2+) serves as cofactor. Thiamine diphosphate is required as a cofactor.

The protein resides in the endoplasmic reticulum membrane. It carries out the reaction 2-hydroxyoctadecanoyl-CoA = heptadecanal + formyl-CoA. It catalyses the reaction (2R)-hydroxyhexadecanoyl-CoA = pentadecanal + formyl-CoA. Its function is as follows. Endoplasmic reticulum 2-OH acyl-CoA lyase involved in the cleavage (C1 removal) reaction in the fatty acid alpha-oxydation in a thiamine pyrophosphate (TPP)-dependent manner. Involved in the phytosphingosine degradation pathway. The polypeptide is 2-hydroxyacyl-CoA lyase 2 (ilvbl) (Xenopus laevis (African clawed frog)).